We begin with the raw amino-acid sequence, 332 residues long: Serpentine receptor class alpha-10 (332 aa).

Residues 1 to 26 (MTSSNISICATEDQMVLQTSLLLRVN) lie on the Extracellular side of the membrane. Residues 27–47 (VILMTTVAIFTFVLTYRALFI) form a helical membrane-spanning segment. The Cytoplasmic segment spans residues 48–64 (LKQRPIFHKSTKILLYT). Residues 65–85 (SLIFVNIHEIIFMVIQCVAFI) form a helical membrane-spanning segment. Residues 86 to 109 (RSFTLSDKPCEIMRTTLECRFKNH) lie on the Extracellular side of the membrane. Residues 110 to 132 (VLIFGIAGMNFNQFGLTVDRLLA) form a helical membrane-spanning segment. Topologically, residues 133-146 (TVIPQTYSHLGSFP) are cytoplasmic. Residues 147 to 167 (GILISILVIGCSIAAPLIIAI) traverse the membrane as a helical segment. Residues 168–191 (GDPYDDIVPNCFFFPQHSAPRANV) are Extracellular-facing. Residues 192 to 212 (FLIILSALVIASIFLNLIIIF) form a helical membrane-spanning segment. The Cytoplasmic segment spans residues 213–239 (ANKKLEKGTRYYVSQRYQKREALISTR). A helical transmembrane segment spans residues 240–260 (IIVYIAASQFLGMVLYSTIVL). The Extracellular portion of the chain corresponds to 261–276 (TLRLHKSMIPVSMYHN). The chain crosses the membrane as a helical span at residues 277–297 (IVWWAYTVPFAAVALPALLIH). The Cytoplasmic segment spans residues 298 to 332 (RINLVGSNRKRVINRITAKVETQEEHMKSLKELWG).

This sequence belongs to the nematode receptor-like protein sra family.

It localises to the membrane. This is Serpentine receptor class alpha-10 from Caenorhabditis briggsae.